Here is a 145-residue protein sequence, read N- to C-terminus: Ribosome-binding factor A (145 aa).

The tract at residues 126-145 (RDLDTETDAEAGSETTKEED) is disordered. Acidic residues predominate over residues 130 to 145 (TETDAEAGSETTKEED).

This sequence belongs to the RbfA family. As to quaternary structure, monomer. Binds 30S ribosomal subunits, but not 50S ribosomal subunits or 70S ribosomes.

It localises to the cytoplasm. Functionally, one of several proteins that assist in the late maturation steps of the functional core of the 30S ribosomal subunit. Associates with free 30S ribosomal subunits (but not with 30S subunits that are part of 70S ribosomes or polysomes). Required for efficient processing of 16S rRNA. May interact with the 5'-terminal helix region of 16S rRNA. In Azorhizobium caulinodans (strain ATCC 43989 / DSM 5975 / JCM 20966 / LMG 6465 / NBRC 14845 / NCIMB 13405 / ORS 571), this protein is Ribosome-binding factor A.